Consider the following 77-residue polypeptide: Acyl carrier protein (77 aa).

A Carrier domain is found at 2 to 77 (SNIEERVRNI…SAIDYVVNNG (76 aa)). Serine 37 is subject to O-(pantetheine 4'-phosphoryl)serine.

This sequence belongs to the acyl carrier protein (ACP) family. 4'-phosphopantetheine is transferred from CoA to a specific serine of apo-ACP by AcpS. This modification is essential for activity because fatty acids are bound in thioester linkage to the sulfhydryl of the prosthetic group.

It is found in the cytoplasm. The protein operates within lipid metabolism; fatty acid biosynthesis. Carrier of the growing fatty acid chain in fatty acid biosynthesis. This chain is Acyl carrier protein, found in Psychromonas ingrahamii (strain DSM 17664 / CCUG 51855 / 37).